The sequence spans 250 residues: Imidazole glycerol phosphate synthase subunit HisF (250 aa).

Active-site residues include aspartate 11 and aspartate 130.

This sequence belongs to the HisA/HisF family. As to quaternary structure, heterodimer of HisH and HisF.

The protein resides in the cytoplasm. The catalysed reaction is 5-[(5-phospho-1-deoxy-D-ribulos-1-ylimino)methylamino]-1-(5-phospho-beta-D-ribosyl)imidazole-4-carboxamide + L-glutamine = D-erythro-1-(imidazol-4-yl)glycerol 3-phosphate + 5-amino-1-(5-phospho-beta-D-ribosyl)imidazole-4-carboxamide + L-glutamate + H(+). The protein operates within amino-acid biosynthesis; L-histidine biosynthesis; L-histidine from 5-phospho-alpha-D-ribose 1-diphosphate: step 5/9. IGPS catalyzes the conversion of PRFAR and glutamine to IGP, AICAR and glutamate. The HisF subunit catalyzes the cyclization activity that produces IGP and AICAR from PRFAR using the ammonia provided by the HisH subunit. This chain is Imidazole glycerol phosphate synthase subunit HisF, found in Elusimicrobium minutum (strain Pei191).